We begin with the raw amino-acid sequence, 485 residues long: MLLLELKKTNQTLETIHFIGIGGVGMSGIAEILYNLGYKVQGSDLVENYNTKRLESYGIKIFLGHAEQNITNVSYVVISSAINPKNPEIKEALERKIPIIRRADMLAELMRLKCSVAVSGSHGKTTTTSLVACLFEAAGLCPTVINGGIINNKSTNAYLGSSNYLIAEADESDATFIHIPSTIAIITNIDPEHLDYYRDFETLIGAFRSFITNLPFYGFAVCCIDHKIVRKLVDDITERKIVTYGIDSEDAHIIAFNINTDIASSTFDVKISLPNVLGTTIIEKITIPTPGRHNILNSLAAIAVGIELDFGIKAIKNGFNNFKGVKRRFTKVAEYNNASIIDDYAHHPEEIKATLATAKNIANKQNGKVIAIFQPHRYSRMQYLFDDFMFCFADADILYITDIYAAGENPIEGITGRNLVDKITKRKHHDKANFLAELDDAVGVIIDNAASGDMIIMMGAGNISSFANELEGRLSSRGFSCHTVV.

Residue 120–126 (GSHGKTT) participates in ATP binding.

It belongs to the MurCDEF family.

It localises to the cytoplasm. The catalysed reaction is UDP-N-acetyl-alpha-D-muramate + L-alanine + ATP = UDP-N-acetyl-alpha-D-muramoyl-L-alanine + ADP + phosphate + H(+). It functions in the pathway cell wall biogenesis; peptidoglycan biosynthesis. In terms of biological role, cell wall formation. The chain is UDP-N-acetylmuramate--L-alanine ligase from Rickettsia africae (strain ESF-5).